A 662-amino-acid chain; its full sequence is Sodium/glucose cotransporter 1 (662 aa).

The Extracellular portion of the chain corresponds to Met-1–Arg-24. The chain crosses the membrane as a helical span at residues Asn-25–Met-47. Residues Phe-48–Val-66 lie on the Cytoplasmic side of the membrane. The helical transmembrane segment at Trp-67 to Thr-90 threads the bilayer. At Gly-91 to Gly-95 the chain is on the extracellular side. Residues Ile-96–Val-117 traverse the membrane as a helical segment. Residues Pro-118–Lys-139 are Cytoplasmic-facing. The chain crosses the membrane as a helical span at residues Arg-140 to Ile-169. Residues Gln-170 to Asp-176 are Extracellular-facing. Residues Ile-177–Ile-193 traverse the membrane as a helical segment. The Cytoplasmic portion of the chain corresponds to Thr-194–Tyr-202. The helical transmembrane segment at Thr-203–Phe-221 threads the bilayer. At Ala-222–Pro-275 the chain is on the extracellular side. An N-linked (GlcNAc...) asparagine glycan is attached at Asn-248. Disulfide bonds link Cys-255/Cys-511, Cys-255/Cys-608, Cys-345/Cys-351, Cys-355/Cys-361, and Cys-517/Cys-522. The helical transmembrane segment at Trp-276 to Gln-295 threads the bilayer. At Val-296 to His-309 the chain is on the cytoplasmic side. The chain crosses the membrane as a helical span at residues Val-310 to Met-331. Over Gly-332–Pro-375 the chain is Extracellular. Residues Asn-376–Thr-406 form a helical membrane-spanning segment. The Cytoplasmic portion of the chain corresponds to Met-407 to Leu-422. A helical membrane pass occupies residues Met-423–Val-444. Residues Gln-445 to Gln-451 are Extracellular-facing. A helical transmembrane segment spans residues Leu-452–Trp-477. Gln-457 is a D-glucose binding site. Topologically, residues Lys-478–Asn-481 are cytoplasmic. The helical transmembrane segment at Glu-482 to Phe-504 threads the bilayer. Over Ala-505–His-525 the chain is Extracellular. The helical transmembrane segment at Tyr-526–Phe-547 threads the bilayer. At Thr-548–Val-642 the chain is on the cytoplasmic side. The helical transmembrane segment at Val-643 to Tyr-660 threads the bilayer. Residues Phe-661–Ala-662 are Extracellular-facing.

The protein belongs to the sodium:solute symporter (SSF) (TC 2.A.21) family. N-glycosylation is not necessary for the cotransporter function. As to expression, found predominantly in intestine, renal cortex and in outer renal medulla.

It is found in the apical cell membrane. It catalyses the reaction D-glucose(out) + 2 Na(+)(out) = D-glucose(in) + 2 Na(+)(in). The catalysed reaction is D-galactose(out) + 2 Na(+)(out) = D-galactose(in) + 2 Na(+)(in). Enhanced by the interaction with PDZK1IP1/MAP17; but unlike SLC5A2/SGLT2, PDZK1IP1 is not essential for SLC5A1 transporter activity. Possibly modulated by cholesterol binding. Functionally, electrogenic Na(+)-coupled sugar symporter that actively transports D-glucose or D-galactose at the plasma membrane, with a Na(+) to sugar coupling ratio of 2:1. Transporter activity is driven by a transmembrane Na(+) electrochemical gradient set by the Na(+)/K(+) pump. Has a primary role in the transport of dietary monosaccharides from enterocytes to blood. Responsible for the absorption of D-glucose or D-galactose across the apical brush-border membrane of enterocytes, whereas basolateral exit is provided by GLUT2. Additionally, functions as a D-glucose sensor in enteroendocrine cells, triggering the secretion of the incretins GCG and GIP that control food intake and energy homeostasis. Together with SGLT2, functions in reabsorption of D-glucose from glomerular filtrate, playing a nonredundant role in the S3 segment of the proximal tubules. Transports D-glucose into endometrial epithelial cells, controlling glycogen synthesis and nutritional support for the embryo as well as the decidual transformation of endometrium prior to conception. Acts as a water channel enabling passive water transport in response to the osmotic gradient created upon sugar and Na(+) uptake. Has high water conductivity comparable to aquaporins and therefore is expected to play an important role in transepithelial water permeability, especially in the small intestine. The protein is Sodium/glucose cotransporter 1 (SLC5A1) of Oryctolagus cuniculus (Rabbit).